A 401-amino-acid polypeptide reads, in one-letter code: Enolase (401 aa).

Residue Q154 participates in (2R)-2-phosphoglycerate binding. The active-site Proton donor is the E197. Mg(2+)-binding residues include D233, E274, and D301. Residues K326, R355, S356, and K377 each coordinate (2R)-2-phosphoglycerate. The Proton acceptor role is filled by K326.

The protein belongs to the enolase family. Mg(2+) is required as a cofactor.

The protein localises to the cytoplasm. The protein resides in the secreted. It localises to the cell surface. It catalyses the reaction (2R)-2-phosphoglycerate = phosphoenolpyruvate + H2O. It participates in carbohydrate degradation; glycolysis; pyruvate from D-glyceraldehyde 3-phosphate: step 4/5. Catalyzes the reversible conversion of 2-phosphoglycerate (2-PG) into phosphoenolpyruvate (PEP). It is essential for the degradation of carbohydrates via glycolysis. This Thermoplasma acidophilum (strain ATCC 25905 / DSM 1728 / JCM 9062 / NBRC 15155 / AMRC-C165) protein is Enolase.